Here is a 393-residue protein sequence, read N- to C-terminus: 1-deoxy-D-xylulose 5-phosphate reductoisomerase (393 aa).

Residues Thr-10, Gly-11, Ser-12, Ile-13, Arg-37, and Asn-124 each coordinate NADPH. Lys-125 lines the 1-deoxy-D-xylulose 5-phosphate pocket. Glu-126 serves as a coordination point for NADPH. Residue Asp-150 coordinates Mn(2+). 1-deoxy-D-xylulose 5-phosphate-binding residues include Ser-151, Glu-152, Ser-182, and His-205. Mn(2+) is bound at residue Glu-152. Residue Gly-211 participates in NADPH binding. Ser-218, Asn-223, Lys-224, and Glu-227 together coordinate 1-deoxy-D-xylulose 5-phosphate. Residue Glu-227 participates in Mn(2+) binding.

The protein belongs to the DXR family. The cofactor is Mg(2+). It depends on Mn(2+) as a cofactor.

It catalyses the reaction 2-C-methyl-D-erythritol 4-phosphate + NADP(+) = 1-deoxy-D-xylulose 5-phosphate + NADPH + H(+). It functions in the pathway isoprenoid biosynthesis; isopentenyl diphosphate biosynthesis via DXP pathway; isopentenyl diphosphate from 1-deoxy-D-xylulose 5-phosphate: step 1/6. Catalyzes the NADPH-dependent rearrangement and reduction of 1-deoxy-D-xylulose-5-phosphate (DXP) to 2-C-methyl-D-erythritol 4-phosphate (MEP). The polypeptide is 1-deoxy-D-xylulose 5-phosphate reductoisomerase (Nitrosococcus oceani (strain ATCC 19707 / BCRC 17464 / JCM 30415 / NCIMB 11848 / C-107)).